A 390-amino-acid chain; its full sequence is Heme chaperone HemW (390 aa).

The Radical SAM core domain maps to proline 15–alanine 254. Tyrosine 24 contributes to the S-adenosyl-L-methionine binding site. 3 residues coordinate [4Fe-4S] cluster: cysteine 30, cysteine 34, and cysteine 37. S-adenosyl-L-methionine contacts are provided by residues glycine 82, glycine 83–threonine 84, glutamate 115, glutamine 142, arginine 154, and aspartate 179.

It belongs to the anaerobic coproporphyrinogen-III oxidase family. HemW subfamily. [4Fe-4S] cluster is required as a cofactor.

It localises to the cytoplasm. Its function is as follows. Probably acts as a heme chaperone, transferring heme to an unknown acceptor. Binds one molecule of heme per monomer, possibly covalently. Binds 1 [4Fe-4S] cluster. The cluster is coordinated with 3 cysteines and an exchangeable S-adenosyl-L-methionine. In Mycobacterium tuberculosis (strain CDC 1551 / Oshkosh), this protein is Heme chaperone HemW.